The chain runs to 115 residues: MTTPTAGDDILSRIADTLATRRPEAGGDPQSSYVAKLLSKAPDAFLKKIGEEATELVMAAKDGQPDRIISETADLWFHCLVALTHYNLRPEDVLAELARREGLSGLEEKARRPRD.

It belongs to the PRA-PH family.

The protein localises to the cytoplasm. It carries out the reaction 1-(5-phospho-beta-D-ribosyl)-ATP + H2O = 1-(5-phospho-beta-D-ribosyl)-5'-AMP + diphosphate + H(+). It participates in amino-acid biosynthesis; L-histidine biosynthesis; L-histidine from 5-phospho-alpha-D-ribose 1-diphosphate: step 2/9. The protein is Phosphoribosyl-ATP pyrophosphatase of Bordetella parapertussis (strain 12822 / ATCC BAA-587 / NCTC 13253).